A 58-amino-acid chain; its full sequence is Small ribosomal subunit protein bS21 (58 aa).

The segment covering 31–42 (EIRKREHYEKPS) has biased composition (basic and acidic residues). Residues 31–58 (EIRKREHYEKPSVKRKKKSEAARKRKYN) are disordered. The segment covering 43-58 (VKRKKKSEAARKRKYN) has biased composition (basic residues).

This sequence belongs to the bacterial ribosomal protein bS21 family.

In Agathobacter rectalis (strain ATCC 33656 / DSM 3377 / JCM 17463 / KCTC 5835 / VPI 0990) (Eubacterium rectale), this protein is Small ribosomal subunit protein bS21.